Consider the following 333-residue polypeptide: Fatty acid hydroxylase domain-containing protein 2 (333 aa).

6 helical membrane-spanning segments follow: residues 29-49 (FILG…TWHL), 77-97 (ILFF…FNGL), 134-154 (TVLF…YPFL), 168-188 (FHWF…LFYY), 215-235 (VISL…PAIV), and 237-257 (PLVM…ALII). The 124-residue stretch at 176–299 (AIFTLIEEVL…LGVLDHLHGT (124 aa)) folds into the Fatty acid hydroxylase domain.

Belongs to the sterol desaturase family.

It localises to the cytoplasm. Its subcellular location is the membrane. In terms of biological role, promotes megakaryocyte differentiation by enhancing ERK phosphorylation and up-regulating RUNX1 expression. The polypeptide is Fatty acid hydroxylase domain-containing protein 2 (FAXDC2) (Macaca fascicularis (Crab-eating macaque)).